A 115-amino-acid chain; its full sequence is Large ribosomal subunit protein bL20 (115 aa).

The protein belongs to the bacterial ribosomal protein bL20 family.

Its function is as follows. Binds directly to 23S ribosomal RNA and is necessary for the in vitro assembly process of the 50S ribosomal subunit. It is not involved in the protein synthesizing functions of that subunit. The chain is Large ribosomal subunit protein bL20 from Synechococcus sp. (strain RCC307).